The chain runs to 165 residues: Ubiquitin-fold modifier-conjugating enzyme 1 (165 aa).

The active-site Glycyl thioester intermediate is C116.

It belongs to the ubiquitin-conjugating enzyme family. UFC1 subfamily.

In terms of biological role, E2-like enzyme which forms an intermediate with UFM1 via a thioester linkage. This is Ubiquitin-fold modifier-conjugating enzyme 1 from Drosophila mojavensis (Fruit fly).